Reading from the N-terminus, the 355-residue chain is Arginine kinase (355 aa).

Positions 8-90 (KLQAGFKKLE…FDPIIEDYHV (83 aa)) constitute a Phosphagen kinase N-terminal domain. 63 to 67 (GVGIY) contributes to the L-arginine binding site. The Phosphagen kinase C-terminal domain occupies 118 to 355 (YVISTRVRCG…LQLIKMEKEM (238 aa)). Residues 121–125 (STRVR) and His184 contribute to the ATP site. An L-arginine-binding site is contributed by Glu224. ATP is bound at residue Arg228. An L-arginine-binding site is contributed by Cys270. Residues 279 to 283 (RASVH) and 308 to 313 (RGTRGE) each bind ATP. Residue Glu313 participates in L-arginine binding.

The protein belongs to the ATP:guanido phosphotransferase family. Monomer.

The enzyme catalyses L-arginine + ATP = N(omega)-phospho-L-arginine + ADP + H(+). In Penaeus japonicus (Kuruma prawn), this protein is Arginine kinase.